A 161-amino-acid chain; its full sequence is Nucleotide-binding protein Bpro_1596 (161 aa).

This sequence belongs to the YajQ family.

Nucleotide-binding protein. In Polaromonas sp. (strain JS666 / ATCC BAA-500), this protein is Nucleotide-binding protein Bpro_1596.